Consider the following 172-residue polypeptide: Adenine phosphoribosyltransferase (172 aa).

This sequence belongs to the purine/pyrimidine phosphoribosyltransferase family. Homodimer.

The protein resides in the cytoplasm. The enzyme catalyses AMP + diphosphate = 5-phospho-alpha-D-ribose 1-diphosphate + adenine. Its pathway is purine metabolism; AMP biosynthesis via salvage pathway; AMP from adenine: step 1/1. Functionally, catalyzes a salvage reaction resulting in the formation of AMP, that is energically less costly than de novo synthesis. The protein is Adenine phosphoribosyltransferase of Alkaliphilus oremlandii (strain OhILAs) (Clostridium oremlandii (strain OhILAs)).